The following is a 216-amino-acid chain: Adenylate kinase (216 aa).

Residue 11 to 16 (GSGKGT) coordinates ATP. An NMP region spans residues 31-60 (ATGDLFRKAIECGDELGDTVKSYMERGELV). Residues threonine 32, arginine 37, 58-60 (ELV), 86-89 (GFPR), and glutamine 93 each bind AMP. The interval 127–163 (GRWVCRSCQSPYQSGCAEVTKGKCSRCQGELYQRPDD) is LID. Arginine 128 contacts ATP. Positions 131, 134, 150, and 153 each coordinate Zn(2+). Arginine 160 and arginine 171 together coordinate AMP. Position 199 (alanine 199) interacts with ATP.

The protein belongs to the adenylate kinase family. In terms of assembly, monomer.

Its subcellular location is the cytoplasm. The enzyme catalyses AMP + ATP = 2 ADP. It participates in purine metabolism; AMP biosynthesis via salvage pathway; AMP from ADP: step 1/1. Its function is as follows. Catalyzes the reversible transfer of the terminal phosphate group between ATP and AMP. Plays an important role in cellular energy homeostasis and in adenine nucleotide metabolism. In Dehalococcoides mccartyi (strain ATCC BAA-2100 / JCM 16839 / KCTC 5957 / BAV1), this protein is Adenylate kinase.